The primary structure comprises 23 residues: Maculatin-1.2 (23 aa).

Ala23 carries the alanine amide modification.

Expressed by the skin dorsal glands.

It localises to the secreted. Shows antibacterial activity against S.aureus and S.uberis. This chain is Maculatin-1.2, found in Ranoidea genimaculata (Brown-spotted tree frog).